We begin with the raw amino-acid sequence, 81 residues long: MNPLISAASVIAAGLAVGLASIGPGVGQGTAAGQAVEGIARQPEAEGKIRGTLLLSLAFMEALTIYGLVVALALLFANPFV.

The next 2 membrane-spanning stretches (helical) occupy residues 3 to 23 (PLIS…ASIG) and 57 to 77 (LAFM…LLFA).

It belongs to the ATPase C chain family. In terms of assembly, F-type ATPases have 2 components, F(1) - the catalytic core - and F(0) - the membrane proton channel. F(1) has five subunits: alpha(3), beta(3), gamma(1), delta(1), epsilon(1). F(0) has four main subunits: a(1), b(1), b'(1) and c(10-14). The alpha and beta chains form an alternating ring which encloses part of the gamma chain. F(1) is attached to F(0) by a central stalk formed by the gamma and epsilon chains, while a peripheral stalk is formed by the delta, b and b' chains.

The protein localises to the plastid. Its subcellular location is the chloroplast thylakoid membrane. F(1)F(0) ATP synthase produces ATP from ADP in the presence of a proton or sodium gradient. F-type ATPases consist of two structural domains, F(1) containing the extramembraneous catalytic core and F(0) containing the membrane proton channel, linked together by a central stalk and a peripheral stalk. During catalysis, ATP synthesis in the catalytic domain of F(1) is coupled via a rotary mechanism of the central stalk subunits to proton translocation. Functionally, key component of the F(0) channel; it plays a direct role in translocation across the membrane. A homomeric c-ring of between 10-14 subunits forms the central stalk rotor element with the F(1) delta and epsilon subunits. This is ATP synthase subunit c, chloroplastic from Acorus calamus var. americanus (American sweet flag).